The chain runs to 1077 residues: ATP-dependent helicase HRQ1 (1077 aa).

The region spanning 299–483 (INSLHQGENV…DMFGINEVTL (185 aa)) is the Helicase ATP-binding domain. 312-319 (TSTSSGKS) contacts ATP. A DEAH box motif is present at residues 423–426 (DELH). Positions 521-678 (ILVQLILNNV…DLVLDFNNIL (158 aa)) constitute a Helicase C-terminal domain.

The protein belongs to the helicase family. HRQ1 subfamily. As to quaternary structure, forms heptamer rings. Interacts with RAD4. Mg(2+) is required as a cofactor.

It localises to the nucleus. The catalysed reaction is Couples ATP hydrolysis with the unwinding of duplex DNA by translocating in the 3'-5' direction.. It carries out the reaction ATP + H2O = ADP + phosphate + H(+). In terms of biological role, helicase with 3'-5' helicase activity involved in genome stability. Functions in the RAD4-dependent nucleotide excision repair (NER) pathway and plays a critical role in DNA interstrand cross-link repair. Unwinds relatively long duplex DNA up to 120-bp and requires a long 3'-tail of at least 70 nucleotides for efficient unwinding of duplex DNA. Activity is significantly stimulated by a preexisting fork structure. Shows both processive helicase and DNA strand annealing activities. Affects telomere length by a non-catalytic mechanism, probably through inhibiting telomerase by competing with it for ssDNA binding. This chain is ATP-dependent helicase HRQ1, found in Saccharomyces cerevisiae (strain ATCC 204508 / S288c) (Baker's yeast).